The sequence spans 75 residues: Exodeoxyribonuclease 7 small subunit (75 aa).

It belongs to the XseB family. In terms of assembly, heterooligomer composed of large and small subunits.

The protein localises to the cytoplasm. The enzyme catalyses Exonucleolytic cleavage in either 5'- to 3'- or 3'- to 5'-direction to yield nucleoside 5'-phosphates.. Functionally, bidirectionally degrades single-stranded DNA into large acid-insoluble oligonucleotides, which are then degraded further into small acid-soluble oligonucleotides. The protein is Exodeoxyribonuclease 7 small subunit of Caldanaerobacter subterraneus subsp. tengcongensis (strain DSM 15242 / JCM 11007 / NBRC 100824 / MB4) (Thermoanaerobacter tengcongensis).